A 387-amino-acid chain; its full sequence is MPESLMVIRSSSTLRKHWEWMTFSADSVSSVHTLTDDLPLESLADQPGAGNVHLLIPPEGLLYRSLTLPNAKYKLTAQTLQWLAEETLPDNTQDWHWTVVDKQNESVEVIGIQSEKLSRYLERLHTAGLNVTRVLPDGCYLPWEVDSWTLVNQQTSWLIRSAAHAFNELDEHWLQHLAAQFPPENMLCYGVVPHGVAAANPLIQHPEIPSLSLYSADIAFQRYDMLHGIFRKQKTVSKSGKWLARLAVSCLVLAILSFVGSRSIALWHTLKIEDQLQQQQQETWQRYFPQIKRTHNFRFYFKQQLAQQYPEAVPLLYHLQTLLLEHPELQLMEANYSQKQKSLTLKMSAKSEANIDRFCELTQSWLPMEKTEKDPVSGVWTVRNSGK.

Over 1–241 the chain is Cytoplasmic; it reads MPESLMVIRS…KQKTVSKSGK (241 aa). A helical transmembrane segment spans residues 242-260; it reads WLARLAVSCLVLAILSFVG. The Periplasmic portion of the chain corresponds to 261 to 387; that stretch reads SRSIALWHTL…GVWTVRNSGK (127 aa).

Belongs to the GSP L family. As to quaternary structure, type II secretion system is composed of four main components: the outer membrane complex, the inner membrane complex, the cytoplasmic secretion ATPase and the periplasm-spanning pseudopilus. Forms homodimers. Interacts with GspM. Interacts with GspE and GspF.

It localises to the cell inner membrane. In terms of biological role, inner membrane component of the type II secretion system required for the energy-dependent secretion of extracellular factors such as proteases and toxins from the periplasm. Plays a role in the complex assembly and recruits GspM resulting in a stable complex in the inner membrane. Provides thus a link between the energy-providing GspE protein in the cytoplasm and the rest of the T2SS machinery. In Escherichia coli (strain K12), this protein is Putative type II secretion system protein L (gspL).